Consider the following 229-residue polypeptide: Octanoyltransferase (229 aa).

The BPL/LPL catalytic domain maps to 45–220; sequence ATAVDELWVV…ELARQFCFVL (176 aa). Substrate-binding positions include 84–91, 151–153, and 164–166; these read RGGQVTYH, ALG, and GVA. Cys-182 (acyl-thioester intermediate) is an active-site residue.

The protein belongs to the LipB family.

Its subcellular location is the cytoplasm. The catalysed reaction is octanoyl-[ACP] + L-lysyl-[protein] = N(6)-octanoyl-L-lysyl-[protein] + holo-[ACP] + H(+). The protein operates within protein modification; protein lipoylation via endogenous pathway; protein N(6)-(lipoyl)lysine from octanoyl-[acyl-carrier-protein]: step 1/2. Catalyzes the transfer of endogenously produced octanoic acid from octanoyl-acyl-carrier-protein onto the lipoyl domains of lipoate-dependent enzymes. Lipoyl-ACP can also act as a substrate although octanoyl-ACP is likely to be the physiological substrate. The chain is Octanoyltransferase from Xylella fastidiosa (strain 9a5c).